We begin with the raw amino-acid sequence, 309 residues long: Olfactory receptor-like protein OLF4 (309 aa).

Over 1–25 (MELENDTRIPEFLLLGFSEEPKLQP) the chain is Extracellular. An N-linked (GlcNAc...) asparagine glycan is attached at asparagine 5. The helical transmembrane segment at 26-49 (FLFGLFLSMYLVTILGNLLLILAV) threads the bilayer. Topologically, residues 50-57 (SSDSHLHT) are cytoplasmic. Residues 58-79 (PMYFFLANLSFVDICFTCTTIP) form a helical membrane-spanning segment. Residues 80 to 100 (KMLVNIQTQRKVITYESCIIQ) lie on the Extracellular side of the membrane. A helical membrane pass occupies residues 101–120 (MYFFELFAGIDNFLLTVMAY). Residues 121-139 (DRYMAICYPLHYMVIMNPQ) lie on the Cytoplasmic side of the membrane. A helical transmembrane segment spans residues 140–158 (LCSLLLLVSWIMSALHSLL). The Extracellular segment spans residues 159-196 (QTLMVLRLSFCTHFQIPHFFCELNQMIQLACSDTFLNN). The chain crosses the membrane as a helical span at residues 197 to 219 (MMLYFAAILLGVAPLVGVLYSYF). Residues 220–236 (KIVSSIRGISSAHSKYK) lie on the Cytoplasmic side of the membrane. A helical membrane pass occupies residues 237–260 (AFSTCASHLSVVSLFYCTSLGVYL). Residues 261–272 (SSAAPQSTHTSS) lie on the Extracellular side of the membrane. Residues 273-292 (VASVMYTVVTPMLNPFIYSL) traverse the membrane as a helical segment. Residues 293–309 (RNKDIKGALNVFFRGKP) lie on the Cytoplasmic side of the membrane.

It belongs to the G-protein coupled receptor 1 family.

It is found in the cell membrane. In terms of biological role, putative odorant or sperm cell receptor. The polypeptide is Olfactory receptor-like protein OLF4 (Canis lupus familiaris (Dog)).